Here is a 471-residue protein sequence, read N- to C-terminus: Mitochondrial distribution and morphology protein 10 (471 aa).

3 disordered regions span residues 272–291 (TEMPSSSSSTSSTTTTSNHG), 374–394 (ADTPGVPPVEPPSTHNRDEEN), and 436–455 (SWAANSTAAGGGQSVGGGVS). Low complexity predominate over residues 276–288 (SSSSSTSSTTTTS). The span at 444–455 (AGGGQSVGGGVS) shows a compositional bias: gly residues.

This sequence belongs to the MDM10 family. As to quaternary structure, component of the ER-mitochondria encounter structure (ERMES) or MDM complex, composed of mmm1, mdm10, mdm12 and mdm34. Associates with the mitochondrial outer membrane sorting assembly machinery SAM(core) complex.

Its subcellular location is the mitochondrion outer membrane. Functionally, component of the ERMES/MDM complex, which serves as a molecular tether to connect the endoplasmic reticulum and mitochondria. Components of this complex are involved in the control of mitochondrial shape and protein biogenesis and may function in phospholipid exchange. mdm10 is involved in the late assembly steps of the general translocase of the mitochondrial outer membrane (TOM complex). Functions in the tom40-specific route of the assembly of outer membrane beta-barrel proteins, including the association of tom40 with the receptor tom22 and small TOM proteins. Can associate with the SAM(core) complex as well as the mdm12-mmm1 complex, both involved in late steps of the major beta-barrel assembly pathway, that is responsible for biogenesis of all outer membrane beta-barrel proteins. May act as a switch that shuttles between both complexes and channels precursor proteins into the tom40-specific pathway. Plays a role in mitochondrial morphology and in the inheritance of mitochondria. This chain is Mitochondrial distribution and morphology protein 10 (mdmB), found in Neosartorya fischeri (strain ATCC 1020 / DSM 3700 / CBS 544.65 / FGSC A1164 / JCM 1740 / NRRL 181 / WB 181) (Aspergillus fischerianus).